We begin with the raw amino-acid sequence, 461 residues long: L-seryl-tRNA(Sec) selenium transferase (461 aa).

K291 is subject to N6-(pyridoxal phosphate)lysine.

Belongs to the SelA family. Requires pyridoxal 5'-phosphate as cofactor.

It is found in the cytoplasm. The enzyme catalyses L-seryl-tRNA(Sec) + selenophosphate + H(+) = L-selenocysteinyl-tRNA(Sec) + phosphate. It functions in the pathway aminoacyl-tRNA biosynthesis; selenocysteinyl-tRNA(Sec) biosynthesis; selenocysteinyl-tRNA(Sec) from L-seryl-tRNA(Sec) (bacterial route): step 1/1. Its function is as follows. Converts seryl-tRNA(Sec) to selenocysteinyl-tRNA(Sec) required for selenoprotein biosynthesis. This is L-seryl-tRNA(Sec) selenium transferase from Caldanaerobacter subterraneus subsp. tengcongensis (strain DSM 15242 / JCM 11007 / NBRC 100824 / MB4) (Thermoanaerobacter tengcongensis).